The chain runs to 264 residues: Thymidylate synthase (264 aa).

Residue Arg21 coordinates dUMP. His51 serves as a coordination point for (6R)-5,10-methylene-5,6,7,8-tetrahydrofolate. 126–127 serves as a coordination point for dUMP; that stretch reads RR. The active-site Nucleophile is Cys146. DUMP-binding positions include 166–169, Asn177, and 207–209; these read RSCD and HLY. Asp169 contacts (6R)-5,10-methylene-5,6,7,8-tetrahydrofolate. Ala263 is a binding site for (6R)-5,10-methylene-5,6,7,8-tetrahydrofolate.

Belongs to the thymidylate synthase family. Bacterial-type ThyA subfamily. In terms of assembly, homodimer.

The protein resides in the cytoplasm. It carries out the reaction dUMP + (6R)-5,10-methylene-5,6,7,8-tetrahydrofolate = 7,8-dihydrofolate + dTMP. Its pathway is pyrimidine metabolism; dTTP biosynthesis. Catalyzes the reductive methylation of 2'-deoxyuridine-5'-monophosphate (dUMP) to 2'-deoxythymidine-5'-monophosphate (dTMP) while utilizing 5,10-methylenetetrahydrofolate (mTHF) as the methyl donor and reductant in the reaction, yielding dihydrofolate (DHF) as a by-product. This enzymatic reaction provides an intracellular de novo source of dTMP, an essential precursor for DNA biosynthesis. This is Thymidylate synthase from Cronobacter sakazakii (strain ATCC BAA-894) (Enterobacter sakazakii).